The primary structure comprises 89 residues: Small ribosomal subunit protein uS15 (89 aa).

The segment covering 1–21 (MSITPERKQEMIKDYATKEGD) has biased composition (basic and acidic residues). Residues 1–23 (MSITPERKQEMIKDYATKEGDTG) are disordered.

It belongs to the universal ribosomal protein uS15 family. Part of the 30S ribosomal subunit. Forms a bridge to the 50S subunit in the 70S ribosome, contacting the 23S rRNA.

In terms of biological role, one of the primary rRNA binding proteins, it binds directly to 16S rRNA where it helps nucleate assembly of the platform of the 30S subunit by binding and bridging several RNA helices of the 16S rRNA. Forms an intersubunit bridge (bridge B4) with the 23S rRNA of the 50S subunit in the ribosome. The polypeptide is Small ribosomal subunit protein uS15 (Rhodospirillum rubrum (strain ATCC 11170 / ATH 1.1.1 / DSM 467 / LMG 4362 / NCIMB 8255 / S1)).